Here is a 141-residue protein sequence, read N- to C-terminus: Neuropeptides CP2 (141 aa).

The signal sequence occupies residues 1 to 26; the sequence is MDSRICTSFARLMASALCVSTLLVTA. The interval 75–94 is disordered; the sequence is KVDMPLPRQRTSSRSSERWA. Position 140 is a histidine amide (His140).

Neurons.

The protein localises to the secreted. Its function is as follows. Mediates intrinsic neuromodulation. The polypeptide is Neuropeptides CP2 (CP2PP) (Aplysia californica (California sea hare)).